Consider the following 350-residue polypeptide: Ribosomal RNA large subunit methyltransferase M (350 aa).

Residues Ser-184, 217 to 220 (APGG), Asp-236, Asp-256, and Asp-272 each bind S-adenosyl-L-methionine. The Proton acceptor role is filled by Lys-301.

This sequence belongs to the class I-like SAM-binding methyltransferase superfamily. RNA methyltransferase RlmE family. RlmM subfamily. As to quaternary structure, monomer.

It is found in the cytoplasm. The enzyme catalyses cytidine(2498) in 23S rRNA + S-adenosyl-L-methionine = 2'-O-methylcytidine(2498) in 23S rRNA + S-adenosyl-L-homocysteine + H(+). In terms of biological role, catalyzes the 2'-O-methylation at nucleotide C2498 in 23S rRNA. In Marinomonas sp. (strain MWYL1), this protein is Ribosomal RNA large subunit methyltransferase M.